Here is an 88-residue protein sequence, read N- to C-terminus: MAVSRLPPAALSLKQFLQRQKVLCLYRDLQRTIRRVPHESDRKYLRDWARDEFRRNKSNTDQDAIRMMISQAHNHLEELRRSLALAGC.

The transit peptide at Met1 to Arg19 directs the protein to the mitochondrion.

This sequence belongs to the complex I LYR family.

The protein localises to the mitochondrion. Involved in efficient integration of the N-module into mitochondrial respiratory chain complex I. This Danio rerio (Zebrafish) protein is LYR motif-containing protein 2 (lyrm2).